A 495-amino-acid polypeptide reads, in one-letter code: L-2,4-diaminobutyrate decarboxylase (495 aa).

K312 is modified (N6-(pyridoxal phosphate)lysine).

This sequence belongs to the group II decarboxylase family. Requires pyridoxal 5'-phosphate as cofactor.

The catalysed reaction is L-2,4-diaminobutanoate + H(+) = propane-1,3-diamine + CO2. Its pathway is siderophore biosynthesis; rhizobactin biosynthesis. This is L-2,4-diaminobutyrate decarboxylase (rhbB) from Rhizobium meliloti (strain 1021) (Ensifer meliloti).